Here is a 202-residue protein sequence, read N- to C-terminus: uncharacterized protein (202 aa).

This sequence belongs to the dienelactone hydrolase family.

This is an uncharacterized protein from Bacillus subtilis (strain 168).